Consider the following 343-residue polypeptide: Interferon-inducible protein AIM2 (343 aa).

The Pyrin domain occupies 1–87; the sequence is MESKYKEILL…AKRLQEEKEK (87 aa). An HIN-200 domain is found at 138-337; that stretch reads MVAQQESIRE…SGVHSTIKVI (200 aa).

The protein belongs to the HIN-200 family. In terms of assembly, self-associates; forms homooligomers in response to cytosolic double-stranded DNA (dsDNA) and the dsDNA seems to serve as oligomerization platform. Component of AIM2 inflammasome, which consists of a signal sensor component (AIM2), an adapter (PYCARD/ASC), which recruits an effector pro-inflammatory caspase (CASP1). Interacts (via pyrin domain) with PYCARD/ASC (via pyrin domain); interaction is direct. Component of the AIM2 PANoptosome complex, a multiprotein complex that drives inflammatory cell death (PANoptosis). Interacts with PYDC5; disrupts assembly of the AIM2 inflammasome complex. Interacts with EIF2AK2/PKR. Interacts with MAPRE1. Interacts with IFI16. Interacts with isoform IFI16-beta of IFI16; preventing the interaction between AIM2 and PYCARD/ASC. Interacts with RACK1; promoting association with PP2A phosphatase and dephosphorylation of AKT1. Interacts with TRIM11; promoting AIM2 recruitment to autophagosomes and autophagy-dependent degradation. (Microbial infection) Interacts with human herpesvirus 8 protein SOX/ORF37; this interaction inhibits AIM2 polymerization and subsequent inflammasome activation. In terms of processing, degraded via selective autophagy following interaction with TRIM11. Expressed in spleen, small intestine, peripheral blood leukocytes, and testis.

The protein localises to the cytoplasm. The protein resides in the inflammasome. Its subcellular location is the nucleus. Inactive in absence of double-stranded DNA (dsDNA). Homooligomerizes upon binding to dsDNA, dsDNA serving as an oligomerization platform. AIM2 requires large dsDNA to generate a structural template that couples dsDNA ligand-binding and homooligomerization. Homooligomerization is followed by recruitment of PYCARD/ASC to initiate speck formation (nucleation). AIM2 and PYCARD/ASC homooligomer filaments assemble bidirectionally and the recognition between AIM2 and PYCARD/ASC oligomers occurs in a head-to-tail manner. Clustered PYCARD/ASC nucleates the formation of CASP1 filaments through the interaction of their respective CARD domains, acting as a platform for CASP1 polymerization and activation. Active CASP1 then specifically processes protein precursors, such as gasdermin-D (GSDMD), IL1B and IL18, leading to the release of mature cytokines in the extracellular milieu or pyroptosis, depending on cell type. AIM2 can be activated in response to events that cause genomic DNA (HIV protease inhibitor nelfinavir) or mitochondrial DNA release in the cytoplasm (such as Perfluoroalkyl substance pollutants or cholesterol overload). Activation of the AIM2 inflammasome is inhibited by isoform IFI16-beta of IFI16, which prevents the interaction between AIM2 and PYCARD/ASC. Activation of the AIM2 inflammasome is inhibited by TRIM11, which promotes autophagy-dependent degradation of AIM2. Its function is as follows. Sensor component of the AIM2 inflammasome, which mediates inflammasome activation in response to the presence of double-stranded DNA (dsDNA) in the cytosol, leading to subsequent pyroptosis. Inflammasomes are supramolecular complexes that assemble in the cytosol in response to pathogens and other damage-associated signals and play critical roles in innate immunity and inflammation. Acts as a recognition receptor (PRR): specifically recognizes and binds dsDNA in the cytosol, and mediates the formation of the inflammasome polymeric complex composed of AIM2, CASP1 and PYCARD/ASC. Recruitment of pro-caspase-1 (proCASP1) to the AIM2 inflammasome promotes caspase-1 (CASP1) activation, which subsequently cleaves and activates inflammatory cytokines IL1B and IL18 and gasdermin-D (GSDMD), promoting cytokine secretion. In some cells, CASP1 activation mediates cleavage and activation of GSDMD, triggering pyroptosis without promoting cytokine secretion. Detects cytosolic dsDNA of viral and bacterial origin in a non-sequence-specific manner. Involved in the DNA damage response caused by acute ionizing radiation by mediating pyroptosis of intestinal epithelial cells and bone marrow cells in response to double-strand DNA breaks. Mechanistically, AIM2 senses DNA damage in the nucleus to mediate inflammasome assembly and inflammatory cell death. Also acts as a regulator of neurodevelopment via its role in the DNA damage response: acts by promoting neural cell death in response to DNA damage in the developing brain, thereby purging genetically compromised cells of the central nervous system. Pyroptosis mediated by the AIM2 inflammasome in response to DNA damage is dependent on GSDMD without involving IL1B and IL18 cytokine secretion. Also acts as a mediator of pyroptosis, necroptosis and apoptosis (PANoptosis), an integral part of host defense against pathogens, in response to bacterial infection. Can also trigger PYCARD/ASC-dependent, caspase-1-independent cell death that involves caspase-8 (CASP8). Also acts as a tumor suppressor independently of its role in inflammatory response. Able to suppress overt cell proliferation in enterocytes: restricts stem cell proliferation in the intestinal mucosa in an inflammasome-independent manner, contributing to a decrease in the likelihood of colorectal cancer development. AIM2 suppresses cell proliferation by inhibiting phosphorylation of AKT1 at 'Ser-473', preventing AKT1 activation and AKT-mTOR signaling pathway. Inhibits AKT1 phosphorylation both by inhibiting the activity of PRKDC/DNA-PK kinase and promoting dephosphorylation by PP2A phosphatase. Also acts as a key regulator of regulatory T-cells (Treg) homeostasis by promoting their stability: acts by preventing AKT1 activation. Its role in Treg homeostasis is important to restain autoimmune diseases. This Homo sapiens (Human) protein is Interferon-inducible protein AIM2.